The primary structure comprises 216 residues: MVRVKICGITRPEDAATADEAGTDAVGCVVEVPVSTPRKVSAEHANEVFSVVSPFVSRVAVLMDNLEPIDRLEEATAVQLHGTEDPETCEELSELGLDVIKTFWVDQRGSVWLGEELIGDEVLAEYCEIVDAVLLDTKSAEGGGSGERHDWDASARLVRRLDVPVILAGGLNPENVREAVEKVRPYAVDTSSGVEKEPGIKDPEAIAEFVRATKSV.

The protein belongs to the TrpF family.

It catalyses the reaction N-(5-phospho-beta-D-ribosyl)anthranilate = 1-(2-carboxyphenylamino)-1-deoxy-D-ribulose 5-phosphate. It participates in amino-acid biosynthesis; L-tryptophan biosynthesis; L-tryptophan from chorismate: step 3/5. The protein is N-(5'-phosphoribosyl)anthranilate isomerase of Methanopyrus kandleri (strain AV19 / DSM 6324 / JCM 9639 / NBRC 100938).